The primary structure comprises 660 residues: DNA mismatch repair protein MutL (660 aa).

It belongs to the DNA mismatch repair MutL/HexB family.

Functionally, this protein is involved in the repair of mismatches in DNA. It is required for dam-dependent methyl-directed DNA mismatch repair. May act as a 'molecular matchmaker', a protein that promotes the formation of a stable complex between two or more DNA-binding proteins in an ATP-dependent manner without itself being part of a final effector complex. This Streptococcus pyogenes serotype M1 protein is DNA mismatch repair protein MutL.